Here is a 765-residue protein sequence, read N- to C-terminus: Glycine--tRNA ligase (765 aa).

A mitochondrion-targeting transit peptide spans 1-87; the sequence is MSLQLLKALP…LRSAAAEFIM (87 aa). The disordered stretch occupies residues 41 to 73; that stretch reads TTTKPTPSAPPPPPPTQPQQPAATTSWGTKKQN. The segment covering 47–58 has biased composition (pro residues); that stretch reads PSAPPPPPPTQP. Residues 95 to 151 enclose the WHEP-TRS domain; it reads QLAPLRERVQEQGNLVRDLKAKGAPEIDVKKAVAELKARKKLLEDKELALTPSVVSF. Glu-331 contributes to the glycine binding site. Residues 363–365 and 374–375 contribute to the ATP site; these read RNE and RV. Glu-382 provides a ligand contact to glycine. 489 to 490 serves as a coordination point for ATP; that stretch reads EC. 609–611 contacts glycine; sequence EPS. Arg-616 contributes to the ATP binding site.

The protein belongs to the class-II aminoacyl-tRNA synthetase family. In terms of assembly, homodimer.

It localises to the mitochondrion. The protein localises to the cytoplasm. It is found in the cell projection. Its subcellular location is the axon. It catalyses the reaction 2 ATP + H(+) = P(1),P(4)-bis(5'-adenosyl) tetraphosphate + diphosphate. It carries out the reaction tRNA(Gly) + glycine + ATP = glycyl-tRNA(Gly) + AMP + diphosphate. Functionally, catalyzes the ATP-dependent ligation of glycine to the 3'-end of its cognate tRNA, via the formation of an aminoacyl-adenylate intermediate (Gly-AMP). Also produces diadenosine tetraphosphate (Ap4A), a universal pleiotropic signaling molecule needed for cell regulation pathways, by direct condensation of 2 ATPs. Thereby, may play a special role in Ap4A homeostasis. Required for terminal arborization of both dendrites and axons during development. The sequence is that of Glycine--tRNA ligase from Drosophila melanogaster (Fruit fly).